Consider the following 492-residue polypeptide: Protein nucleotidyltransferase YdiU (492 aa).

Positions 94, 96, 97, 117, 129, 130, 180, and 187 each coordinate ATP. The active-site Proton acceptor is the aspartate 257. Positions 258 and 267 each coordinate Mg(2+). Residue aspartate 267 coordinates ATP.

The protein belongs to the SELO family. Mg(2+) is required as a cofactor. It depends on Mn(2+) as a cofactor.

It carries out the reaction L-seryl-[protein] + ATP = 3-O-(5'-adenylyl)-L-seryl-[protein] + diphosphate. The catalysed reaction is L-threonyl-[protein] + ATP = 3-O-(5'-adenylyl)-L-threonyl-[protein] + diphosphate. The enzyme catalyses L-tyrosyl-[protein] + ATP = O-(5'-adenylyl)-L-tyrosyl-[protein] + diphosphate. It catalyses the reaction L-histidyl-[protein] + UTP = N(tele)-(5'-uridylyl)-L-histidyl-[protein] + diphosphate. It carries out the reaction L-seryl-[protein] + UTP = O-(5'-uridylyl)-L-seryl-[protein] + diphosphate. The catalysed reaction is L-tyrosyl-[protein] + UTP = O-(5'-uridylyl)-L-tyrosyl-[protein] + diphosphate. Its function is as follows. Nucleotidyltransferase involved in the post-translational modification of proteins. It can catalyze the addition of adenosine monophosphate (AMP) or uridine monophosphate (UMP) to a protein, resulting in modifications known as AMPylation and UMPylation. This Halalkalibacterium halodurans (strain ATCC BAA-125 / DSM 18197 / FERM 7344 / JCM 9153 / C-125) (Bacillus halodurans) protein is Protein nucleotidyltransferase YdiU.